The following is a 289-amino-acid chain: Probable ABC transporter permease protein BRA0749/BS1330_II0742 (289 aa).

Transmembrane regions (helical) follow at residues 9 to 29, 70 to 90, 99 to 119, 144 to 166, 213 to 233, and 260 to 280; these read FLIL…VVHL, VWTV…AIIL, VARV…AIVW, IQWL…LVTV, IAIV…WVMT, and EASA…VIYI. One can recognise an ABC transmembrane type-1 domain in the interval 65–279; that stretch reads LWRTAVWTVA…AILLVFTVIY (215 aa).

The protein belongs to the binding-protein-dependent transport system permease family. As to quaternary structure, the complex is composed of two ATP-binding proteins (BRA0745), two transmembrane proteins (BRA0749) and a solute-binding protein (BRA0748).

Its subcellular location is the cell inner membrane. Its function is as follows. Probably part of an ABC transporter complex. Probably responsible for the translocation of the substrate across the membrane. The protein is Probable ABC transporter permease protein BRA0749/BS1330_II0742 of Brucella suis biovar 1 (strain 1330).